Consider the following 95-residue polypeptide: Aspartyl/glutamyl-tRNA(Asn/Gln) amidotransferase subunit C (95 aa).

The protein belongs to the GatC family. Heterotrimer of A, B and C subunits.

The catalysed reaction is L-glutamyl-tRNA(Gln) + L-glutamine + ATP + H2O = L-glutaminyl-tRNA(Gln) + L-glutamate + ADP + phosphate + H(+). It catalyses the reaction L-aspartyl-tRNA(Asn) + L-glutamine + ATP + H2O = L-asparaginyl-tRNA(Asn) + L-glutamate + ADP + phosphate + 2 H(+). Its function is as follows. Allows the formation of correctly charged Asn-tRNA(Asn) or Gln-tRNA(Gln) through the transamidation of misacylated Asp-tRNA(Asn) or Glu-tRNA(Gln) in organisms which lack either or both of asparaginyl-tRNA or glutaminyl-tRNA synthetases. The reaction takes place in the presence of glutamine and ATP through an activated phospho-Asp-tRNA(Asn) or phospho-Glu-tRNA(Gln). This chain is Aspartyl/glutamyl-tRNA(Asn/Gln) amidotransferase subunit C, found in Thermodesulfovibrio yellowstonii (strain ATCC 51303 / DSM 11347 / YP87).